Reading from the N-terminus, the 394-residue chain is WAT1-related protein At2g40900 (394 aa).

The next 10 membrane-spanning stretches (helical) occupy residues 13–33 (FAMV…KTVL), 40–60 (YVLV…FALL), 67–87 (SKMT…GPVI), 102–122 (TFSS…ATLF), 142–162 (LVTV…INFF), 180–200 (AAVF…LQAA), 209–229 (LSMS…LAFV), 245–265 (LLAS…VQGL), 273–293 (VFVT…SFFV), and 298–318 (IYLG…AVLW). 2 EamA domains span residues 22–147 (YAGM…TVVG) and 189–317 (LSWA…YAVL).

Belongs to the drug/metabolite transporter (DMT) superfamily. Plant drug/metabolite exporter (P-DME) (TC 2.A.7.4) family.

It is found in the membrane. This is WAT1-related protein At2g40900 from Arabidopsis thaliana (Mouse-ear cress).